Consider the following 652-residue polypeptide: uncharacterized protein (652 aa).

Basic and acidic residues-rich tracts occupy residues 1 to 13 (MSVT…TERK) and 641 to 652 (ATERTDNLADAA). 2 disordered regions span residues 1–21 (MSVT…PAKT) and 628–652 (VPGW…ADAA).

It belongs to the ParB family.

This is an uncharacterized protein from Escherichia coli O157:H7.